Consider the following 89-residue polypeptide: Small ribosomal subunit protein uS15 (89 aa).

Residues 1–10 (MSLDTTEKQE) show a composition bias toward basic and acidic residues. Residues 1–23 (MSLDTTEKQELINAHQTHATDTG) are disordered. Residues 14–23 (AHQTHATDTG) are compositionally biased toward polar residues.

Belongs to the universal ribosomal protein uS15 family. As to quaternary structure, part of the 30S ribosomal subunit. Forms a bridge to the 50S subunit in the 70S ribosome, contacting the 23S rRNA.

Functionally, one of the primary rRNA binding proteins, it binds directly to 16S rRNA where it helps nucleate assembly of the platform of the 30S subunit by binding and bridging several RNA helices of the 16S rRNA. Forms an intersubunit bridge (bridge B4) with the 23S rRNA of the 50S subunit in the ribosome. This chain is Small ribosomal subunit protein uS15, found in Synechococcus sp. (strain WH7803).